The primary structure comprises 145 residues: Large ribosomal subunit protein uL16 (145 aa).

The protein belongs to the universal ribosomal protein uL16 family. Part of the 50S ribosomal subunit.

Binds 23S rRNA and is also seen to make contacts with the A and possibly P site tRNAs. The polypeptide is Large ribosomal subunit protein uL16 (Lactobacillus johnsonii (strain CNCM I-12250 / La1 / NCC 533)).